We begin with the raw amino-acid sequence, 1714 residues long: MHLRAHRTRRGKVSPTAKTKSLLHFIVLCVAGVVVHAQEQGIDILHQLGLGGKDVRHSSPATAVPSASTPLPQGVHLTESGVIFKNDAYIETPFVKILPVNLGQPFTILTGLQSHRVNNAFLFSIRNKNRLQLGVQLLPKKLVVHIRGKQPAVFNYSVHDEQWHSFAITIRNQSVSMFVECGKKYFSTETIPEVQTFDSNSVFTLGSMNNNSIHFEGIVCQLDIIPSAEASADYCRYVKQQCRQADKYQPETSIPCTTLIPTKIPEHSPPPKLFAEKVLSEDTFTEGKSIPNIIKNDSETVYKRQEHQISRSQLSSLQSGNVSAVDLTNHGIQAKEMITEEDTQTNFSLSVTTHRISEAKMNTKEKFSSLLNMSDNITQHDDRVTGLSLFKKMPSILPQIKQDTITNLKKAITANLHTNELMEMQPILNTSLHRVTNEPSVDNHLDLRKEGEFYPDATYPIENSYETELYDYYYYEDLNTMLEMEYLRGPKGDTGPPGPPGPAGIPGPSGKRGPRGIPGPHGNPGLPGLPGPKGPKGDPGFSPGQPVPGEKGDQGLSGLMGPPGMQGDKGLKGHPGLPGLPGEQGIPGFAGNIGSPGYPGRQGLAGPEGNPGPKGAQGFIGSPGEAGQLGPEGERGIPGIRGKKGFKGRQGFPGDFGDRGPAGLDGSPGLVGGTGPPGFPGLRGSVGPVGPIGPAGIPGPMGLSGNKGLPGIKGDKGEQGTAGELGEPGYPGDKGAVGLPGPPGMRGKSGPSGQTGDPGLQGPSGPPGPEGFPGDIGIPGQNGPEGPKGLLGNRGPPGPPGLKGTQGEEGPIGAFGELGPRGKPGQKGYAGEPGPEGLKGEVGDQGNIGKIGETGPVGLPGEVGMTGSIGEKGERGSPGPLGPQGEKGVMGYPGPPGVPGPIGPLGLPGHVGARGPPGSQGPKGQRGSRGPDGLLGEQGIQGAKGEKGDQGKRGPHGLIGKTGNPGERGFQGKPGLQGLPGSTGDRGLPGEPGLRGLQGDVGPPGEMGMEGPPGTEGESGLQGEPGAKGDVGTAGSVGGTGEPGLRGEPGAPGEEGLQGKDGLKGVPGGRGLPGEDGEKGEMGLPGIIGPLGRSGQTGLPGPEGIVGIPGQRGRPGKKGDKGQIGPTGEVGSRGPPGKIGKSGPKGARGTRGAVGHLGLMGPDGEPGIPGYRGHQGQPGPSGLPGPKGEKGYPGEDSTVLGPPGPRGEPGPVGDQGERGEPGAEGYKGHVGVPGLRGATGQQGPPGEPGDQGEQGLKGERGSEGNKGKKGAPGPSGKPGIPGLQGLLGPKGIQGYHGADGISGNPGKIGPPGKQGLPGIRGGPGRTGLAGAPGPPGVKGSSGLPGSPGIQGPKGEQGLPGQPGIQGKRGHRGAQGDQGPCGDPGLKGQPGEYGVQGLTGFQGFPGPKGPEGDAGIVGISGPKGPIGHRGNTGPLGREGIIGPTGRTGPRGEKGFRGETGPQGPRGQPGPPGPPGAPGPRKQMDINAAIQALIESNTALQMESYQNTEVTLIDHSEEIFKTLNYLSNLLHSIKNPLGTRDNPARICKDLLNCEQKVSDGKYWIDPNLGCPSDAIEVFCNFSAGGQTCLPPVSVTKLEFGVGKVQMNFLHLLSSEATHIITIHCLNTPRWTSTQTSGPGLPIGFKGWNGQIFKVNTLLEPKVLSDDCKIQDGSWHKATFLFHTQEPNQLPVIEVQKLPHLKTERKYYIDSSSVCFL.

The first 35 residues, 1–35, serve as a signal peptide directing secretion; the sequence is MHLRAHRTRRGKVSPTAKTKSLLHFIVLCVAGVVV. One can recognise a Laminin G-like domain in the interval 141–217; that stretch reads KLVVHIRGKQ…MNNNSIHFEG (77 aa). N155, N321, and N376 each carry an N-linked (GlcNAc...) asparagine glycan. 17 Collagen-like domains span residues 487–542, 552–611, 660–719, 741–797, 798–857, 858–887, 888–947, 948–1007, 1011–1052, 1053–1112, 1116–1170, 1172–1196, 1201–1249, 1252–1306, 1309–1353, 1354–1413, and 1420–1479; these read LRGP…PGFS, GDQG…EGNP, GPAG…KGEQ, GPPG…RGPP, GPPG…TGPV, GLPG…QGEK, GVMG…KGEK, GDQG…PGEM, GPPG…PGAP, GEEG…PGQR, GKKG…GIPG, RGHQ…PGED, GPPG…GEPG, GEQG…GNPG, GPPG…QGPK, GEQG…EGDA, and GPKG…PGPR. Residues 487–1481 form a disordered region; that stretch reads LRGPKGDTGP…PPGAPGPRKQ (995 aa). A compositionally biased stretch (pro residues) spans 496-505; the sequence is PPGPPGPAGI. Composition is skewed to low complexity over residues 574–587 and 685–701; these read HPGL…QGIP and SVGP…PGPM. Residues 893–902 are compositionally biased toward pro residues; that stretch reads PGPPGVPGPI. Over residues 985–1019 the composition is skewed to low complexity; it reads DRGLPGEPGLRGLQGDVGPPGEMGMEGPPGTEGES. Composition is skewed to gly residues over residues 1035–1044 and 1065–1074; these read GSVGGTGEPG and GVPGGRGLPG. 2 stretches are compositionally biased toward low complexity: residues 1132–1145 and 1174–1186; these read SRGP…SGPK and HQGQ…LPGP. Over residues 1256 to 1266 the composition is skewed to basic and acidic residues; it reads LKGERGSEGNK. Residues 1271 to 1293 show a composition bias toward low complexity; it reads APGPSGKPGIPGLQGLLGPKGIQ. Residues 1318-1327 are compositionally biased toward gly residues; that stretch reads GIRGGPGRTG. Residues 1466 to 1476 are compositionally biased toward pro residues; the sequence is QPGPPGPPGAP. The Fibrillar collagen NC1 domain occupies 1515 to 1714; that stretch reads EEIFKTLNYL…YIDSSSVCFL (200 aa).

Belongs to the fibrillar collagen family.

Its subcellular location is the secreted. It is found in the extracellular space. The protein resides in the extracellular matrix. Its function is as follows. May participate in regulating type I collagen fibrillogenesis at specific anatomical locations during fetal development. The chain is Collagen alpha-1(XXIV) chain (COL24A1) from Homo sapiens (Human).